Here is an 872-residue protein sequence, read N- to C-terminus: DNA mismatch repair protein MutS (872 aa).

ATP is bound at residue 602-609 (GPNMSGKS).

It belongs to the DNA mismatch repair MutS family.

Its function is as follows. This protein is involved in the repair of mismatches in DNA. It is possible that it carries out the mismatch recognition step. This protein has a weak ATPase activity. The protein is DNA mismatch repair protein MutS of Staphylococcus aureus (strain MRSA252).